We begin with the raw amino-acid sequence, 814 residues long: Phenylalanine--tRNA ligase beta subunit (814 aa).

The tRNA-binding domain maps to 39–153 (SKNVNGVVLG…LKHELGTPVS (115 aa)). Positions 414-500 (NEDIFIKLRR…RLIGYDRFDL (87 aa)) constitute a B5 domain. The Mg(2+) site is built by aspartate 478, aspartate 484, glutamate 487, and glutamate 488. An FDX-ACB domain is found at 720–813 (PIVPKIERDI…IEKSFQTKLR (94 aa)).

This sequence belongs to the phenylalanyl-tRNA synthetase beta subunit family. Type 1 subfamily. In terms of assembly, tetramer of two alpha and two beta subunits. The cofactor is Mg(2+).

The protein localises to the cytoplasm. It carries out the reaction tRNA(Phe) + L-phenylalanine + ATP = L-phenylalanyl-tRNA(Phe) + AMP + diphosphate + H(+). This chain is Phenylalanine--tRNA ligase beta subunit, found in Prochlorococcus marinus (strain MIT 9312).